A 301-amino-acid polypeptide reads, in one-letter code: Fatty acid elongase 3 (301 aa).

A run of 7 helical transmembrane segments spans residues 31–51, 64–84, 122–142, 161–181, 187–207, 219–239, and 257–277; these read VPYIAGVMYLILVLYVPKSIM, IVWNLFLTLFSMCGAYYTVPY, ALADSFYFNGDVGFWVALFAL, VIFLHWYHHLTVMLFCWFAYV, GLWFASMNYSVHSIMYLYYFV, FAPIITFVQIFQMVVGTIVVC, and FSLHTGLVMYVSYLLLFSQLF. Positions 165 to 169 match the HxxHH motif motif; the sequence is HWYHH. His168 serves as the catalytic Nucleophile.

This sequence belongs to the ELO family.

It is found in the endoplasmic reticulum membrane. The enzyme catalyses an acyl-CoA + malonyl-CoA + H(+) = a 3-oxoacyl-CoA + CO2 + CoA. Its pathway is lipid metabolism; fatty acid biosynthesis. In terms of biological role, involved in the synthesis of fatty acids. Elongates C14 fatty acids to C18. This Trypanosoma brucei brucei (strain 927/4 GUTat10.1) protein is Fatty acid elongase 3.